The sequence spans 767 residues: 5-methyltetrahydropteroyltriglutamate--homocysteine methyltransferase (767 aa).

Residues 17–20 and lysine 117 each bind 5-methyltetrahydropteroyltri-L-glutamate; that span reads RELK. L-homocysteine is bound by residues 442–444 and glutamate 495; that span reads IGS. L-methionine-binding positions include 442-444 and glutamate 495; that span reads IGS. Residues 526–527 and tryptophan 572 each bind 5-methyltetrahydropteroyltri-L-glutamate; that span reads RC. An L-homocysteine-binding site is contributed by aspartate 610. Aspartate 610 contacts L-methionine. Position 616 (glutamate 616) interacts with 5-methyltetrahydropteroyltri-L-glutamate. 3 residues coordinate Zn(2+): histidine 653, cysteine 655, and glutamate 677. The Proton donor role is filled by histidine 706. Zn(2+) is bound at residue cysteine 738.

This sequence belongs to the vitamin-B12 independent methionine synthase family. Zn(2+) is required as a cofactor.

It catalyses the reaction 5-methyltetrahydropteroyltri-L-glutamate + L-homocysteine = tetrahydropteroyltri-L-glutamate + L-methionine. It functions in the pathway amino-acid biosynthesis; L-methionine biosynthesis via de novo pathway; L-methionine from L-homocysteine (MetE route): step 1/1. In terms of biological role, catalyzes the transfer of a methyl group from 5-methyltetrahydrofolate to homocysteine resulting in methionine formation. This chain is 5-methyltetrahydropteroyltriglutamate--homocysteine methyltransferase, found in Bifidobacterium animalis subsp. lactis (strain AD011).